The chain runs to 135 residues: MRNSTPSKNHFSPPSIKAQHKVAKKRAIRRSRIDLSCGCSYYIHINCRNYGFSHRGQHHCSSTQEWRLYLGGAKSPLFQDHAAPSNSSRVPDVCDPNTDNVQPRVEESTADAQMLPGSDALPLFDGDFWDDIIDF.

A Nuclear localization signal motif is present at residues Lys-17–Arg-32. A zinc finger spans residues Cys-37–His-54. A disordered region spans residues Ala-82 to Gln-102. The interval Ala-120 to Phe-135 is transactivation.

It belongs to the geminiviridae transcriptional activator protein family. Monomer. Homodimer. Homooligomer. Self-interaction correlates with nuclear localization and efficient activation of transcription. Monomers suppress local silencing by interacting with and inactivating host adenosine kinase 2 (ADK2) in the cytoplasm. Interacts with and inhibits host SNF1 kinase. Binds to ssDNA. In terms of processing, phosphorylated.

It localises to the host nucleus. The protein localises to the host cytoplasm. Strong activator of the late viral genes promoters. Enhances the expression of the capsid protein and nuclear shuttle protein. Acts as a suppressor of RNA-mediated gene silencing, also known as post-transcriptional gene silencing (PTGS), a mechanism of plant viral defense that limits the accumulation of viral RNAs. Suppresses the host RNA silencing by inhibiting adenosine kinase 2 (ADK2), a kinase involved in a general methylation pathway. Also suppresses the host basal defense by interacting with and inhibiting SNF1 kinase, a key regulator of cell metabolism implicated in innate antiviral defense. Determines pathogenicity. The polypeptide is Transcriptional activator protein (Mungbean yellow mosaic virus (strain Vigna) (MYMV)).